The sequence spans 887 residues: Alanine--tRNA ligase (887 aa).

Zn(2+) is bound by residues H564, H568, C675, and H679. A compositionally biased stretch (gly residues) spans 851–866 (GQGGGGRPDMAQGGGP). The tract at residues 851–871 (GQGGGGRPDMAQGGGPDGDKA) is disordered.

Belongs to the class-II aminoacyl-tRNA synthetase family. Zn(2+) is required as a cofactor.

Its subcellular location is the cytoplasm. It carries out the reaction tRNA(Ala) + L-alanine + ATP = L-alanyl-tRNA(Ala) + AMP + diphosphate. Functionally, catalyzes the attachment of alanine to tRNA(Ala) in a two-step reaction: alanine is first activated by ATP to form Ala-AMP and then transferred to the acceptor end of tRNA(Ala). Also edits incorrectly charged Ser-tRNA(Ala) and Gly-tRNA(Ala) via its editing domain. The protein is Alanine--tRNA ligase of Rhizorhabdus wittichii (strain DSM 6014 / CCUG 31198 / JCM 15750 / NBRC 105917 / EY 4224 / RW1) (Sphingomonas wittichii).